A 257-amino-acid chain; its full sequence is 3-deoxy-manno-octulosonate cytidylyltransferase (257 aa).

Belongs to the KdsB family.

Its subcellular location is the cytoplasm. The catalysed reaction is 3-deoxy-alpha-D-manno-oct-2-ulosonate + CTP = CMP-3-deoxy-beta-D-manno-octulosonate + diphosphate. It participates in nucleotide-sugar biosynthesis; CMP-3-deoxy-D-manno-octulosonate biosynthesis; CMP-3-deoxy-D-manno-octulosonate from 3-deoxy-D-manno-octulosonate and CTP: step 1/1. Its pathway is bacterial outer membrane biogenesis; lipopolysaccharide biosynthesis. Activates KDO (a required 8-carbon sugar) for incorporation into bacterial lipopolysaccharide in Gram-negative bacteria. The sequence is that of 3-deoxy-manno-octulosonate cytidylyltransferase from Chromohalobacter salexigens (strain ATCC BAA-138 / DSM 3043 / CIP 106854 / NCIMB 13768 / 1H11).